Consider the following 434-residue polypeptide: UDP-N-acetylglucosamine 1-carboxyvinyltransferase (434 aa).

22–23 (KN) provides a ligand contact to phosphoenolpyruvate. Arginine 93 serves as a coordination point for UDP-N-acetyl-alpha-D-glucosamine. Cysteine 117 functions as the Proton donor in the catalytic mechanism. Position 117 is a 2-(S-cysteinyl)pyruvic acid O-phosphothioketal (cysteine 117). Positions 307 and 329 each coordinate UDP-N-acetyl-alpha-D-glucosamine.

Belongs to the EPSP synthase family. MurA subfamily.

Its subcellular location is the cytoplasm. It catalyses the reaction phosphoenolpyruvate + UDP-N-acetyl-alpha-D-glucosamine = UDP-N-acetyl-3-O-(1-carboxyvinyl)-alpha-D-glucosamine + phosphate. Its pathway is cell wall biogenesis; peptidoglycan biosynthesis. In terms of biological role, cell wall formation. Adds enolpyruvyl to UDP-N-acetylglucosamine. This chain is UDP-N-acetylglucosamine 1-carboxyvinyltransferase, found in Coxiella burnetii (strain CbuG_Q212) (Coxiella burnetii (strain Q212)).